We begin with the raw amino-acid sequence, 349 residues long: S-adenosylmethionine:tRNA ribosyltransferase-isomerase (349 aa).

Belongs to the QueA family. In terms of assembly, monomer.

It is found in the cytoplasm. The enzyme catalyses 7-aminomethyl-7-carbaguanosine(34) in tRNA + S-adenosyl-L-methionine = epoxyqueuosine(34) in tRNA + adenine + L-methionine + 2 H(+). It participates in tRNA modification; tRNA-queuosine biosynthesis. In terms of biological role, transfers and isomerizes the ribose moiety from AdoMet to the 7-aminomethyl group of 7-deazaguanine (preQ1-tRNA) to give epoxyqueuosine (oQ-tRNA). This Cupriavidus pinatubonensis (strain JMP 134 / LMG 1197) (Cupriavidus necator (strain JMP 134)) protein is S-adenosylmethionine:tRNA ribosyltransferase-isomerase.